The chain runs to 135 residues: C-type natriuretic peptide (135 aa).

The N-terminal stretch at 1-25 (MSGHTSFYCGLLLLLLIQVQARPRA) is a signal peptide. The propeptide occupies 26–113 (DDSLQVLSRL…PLRFKGRSKK (88 aa)). Residues 46–67 (EELNNEAQEISPAASLPDLNTD) form a disordered region. The cysteines at positions 119 and 135 are disulfide-linked.

It belongs to the natriuretic peptide family.

It is found in the secreted. Hormone which may be vasoactive and natriuretic. Has a cGMP-stimulating activity. The protein is C-type natriuretic peptide of Squalus acanthias (Spiny dogfish).